The following is a 435-amino-acid chain: Probable tRNA pseudouridine synthase D (435 aa).

The Nucleophile role is filled by D95. In terms of domain architecture, TRUD spans G170–V396.

The protein belongs to the pseudouridine synthase TruD family.

The catalysed reaction is uridine(13) in tRNA = pseudouridine(13) in tRNA. In terms of biological role, could be responsible for synthesis of pseudouridine from uracil-13 in transfer RNAs. This Natronomonas pharaonis (strain ATCC 35678 / DSM 2160 / CIP 103997 / JCM 8858 / NBRC 14720 / NCIMB 2260 / Gabara) (Halobacterium pharaonis) protein is Probable tRNA pseudouridine synthase D.